The following is a 940-amino-acid chain: Phosphoenolpyruvate carboxylase (940 aa).

Catalysis depends on residues His-138 and Lys-603.

It belongs to the PEPCase type 1 family. Mg(2+) serves as cofactor.

It catalyses the reaction oxaloacetate + phosphate = phosphoenolpyruvate + hydrogencarbonate. Its function is as follows. Forms oxaloacetate, a four-carbon dicarboxylic acid source for the tricarboxylic acid cycle. The chain is Phosphoenolpyruvate carboxylase from Streptococcus thermophilus (strain ATCC BAA-491 / LMD-9).